The chain runs to 116 residues: Large ribosomal subunit protein bL19 (116 aa).

The protein belongs to the bacterial ribosomal protein bL19 family.

Functionally, this protein is located at the 30S-50S ribosomal subunit interface and may play a role in the structure and function of the aminoacyl-tRNA binding site. This is Large ribosomal subunit protein bL19 from Pseudothermotoga lettingae (strain ATCC BAA-301 / DSM 14385 / NBRC 107922 / TMO) (Thermotoga lettingae).